The primary structure comprises 398 residues: MASTSLLKASPVLDKSEWVKGQSVLFRQPSSASVVLRNRATSLTVRAASSYADELVKTAKTIASPGRGILAMDESNATCGKRLDSIGLENTEANRQAFRTLLVSAPGLGQYVSGAILFEETLYQSTTEGKKMVDVLVEQNIVPGIKVDKGLVPLVGSNNESWCQGLDGLSSRTAAYYQQGARFAKWRTVVSIPNGPSALAVKEAAWGLARYAAISQDSGLVPIVEPEILLDGEHDIDRTYDVAEKVWAEVFFYLAQNNVMFEGILLKPSMVTPGAESKDRATPEQVAAYTLKLLRNRVPPAVPGIMFLSGGQSEVEATLNLNAMNQAPNPWHVSFSYARALQNTCLKTWGGRPENVNAAQTTLLARAKANSLAQLGKYTGEGESEEAKEGMFVKGYTY.

The transit peptide at 1–46 (MASTSLLKASPVLDKSEWVKGQSVLFRQPSSASVVLRNRATSLTVR) directs the protein to the chloroplast. Arg-95 provides a ligand contact to substrate. Ser-157 carries the post-translational modification Phosphoserine. A substrate-binding site is contributed by Lys-185. Position 215 is a phosphoserine (Ser-215). Residue Glu-225 is the Proton acceptor of the active site. The active-site Schiff-base intermediate with dihydroxyacetone-P is Lys-267. 309-311 (SGG) is a substrate binding site. Lys-394 is subject to N6,N6,N6-trimethyllysine.

Belongs to the class I fructose-bisphosphate aldolase family. As to quaternary structure, homotetramer. Post-translationally, can be trimethylated at Lys-394 by LSMT-L. The methylation level has no influence on the ologomerization state or on the kinetic properties of the enzyme. In terms of processing, phosphorylated on tyrosine residues in response to abscisic acid (ABA) in germinating seeds. Highly expressed in rosettes leaves.

Its subcellular location is the plastid. It is found in the chloroplast. It localises to the plastoglobule. The protein localises to the chloroplast stroma. It catalyses the reaction beta-D-fructose 1,6-bisphosphate = D-glyceraldehyde 3-phosphate + dihydroxyacetone phosphate. Its pathway is carbohydrate degradation; glycolysis; D-glyceraldehyde 3-phosphate and glycerone phosphate from D-glucose: step 4/4. In terms of biological role, plays a key role in glycolysis and gluconeogenesis. The chain is Fructose-bisphosphate aldolase 2, chloroplastic from Arabidopsis thaliana (Mouse-ear cress).